Here is a 330-residue protein sequence, read N- to C-terminus: Elongation factor Ts, mitochondrial (330 aa).

The N-terminal 16 residues, 1–16 (MYRNCRKAFTFSLRHY), are a transit peptide targeting the mitochondrion.

The protein belongs to the EF-Ts family.

It is found in the mitochondrion. Functionally, associates with the EF-Tu.GDP complex and induces the exchange of GDP to GTP. It remains bound to the aminoacyl-tRNA.EF-Tu.GTP complex up to the GTP hydrolysis stage on the ribosome. The polypeptide is Elongation factor Ts, mitochondrial (Laccaria bicolor (strain S238N-H82 / ATCC MYA-4686) (Bicoloured deceiver)).